A 153-amino-acid chain; its full sequence is ORM1-like protein 1 (153 aa).

The Cytoplasmic portion of the chain corresponds to 1–26; it reads MNVGVAHSEVNPNTRVMNSRGMWLTY. A run of 2 helical transmembrane segments spans residues 27 to 46 and 47 to 67; these read ALGV…FSVP and VAWT…LHAV. Over 68 to 100 the chain is Cytoplasmic; the sequence is KGTPFETPDQGKARLLTHWEQLDYGVQFTSSRK. The chain crosses the membrane as a helical span at residues 101–121; it reads FLTISPIILYFLASFYTKYDP. The Extracellular segment spans residues 122–123; it reads TH. Residues 124-144 form a helical membrane-spanning segment; sequence FFINTASLLSVLIPKLPQLHG. The Cytoplasmic segment spans residues 145–153; it reads VRIFGINKY.

This sequence belongs to the ORM family. In terms of assembly, ceramide-sensitive subunit of the serine palmitoyltransferase (SPT) complex, which is also composed of SPTLC1, SPTLC2/3 and SPTSSA/B.

It localises to the endoplasmic reticulum membrane. Its function is as follows. Plays an essential role in the homeostatic regulation of sphingolipid de novo biosynthesis by modulating the activity of the serine palmitoyltransferase (SPT) in response to ceramide levels. When complexed to SPT, the binding of ceramides to its N-terminus stabilizes a conformation that block SPT substrate entry, hence preventing SPT catalytic activity. Through this mechanism, maintains ceramide levels at sufficient concentrations for the production of complex sphingolipids, but which prevents the accumulation of ceramides to levels that trigger apoptosis. The polypeptide is ORM1-like protein 1 (ormdl1) (Xenopus laevis (African clawed frog)).